The primary structure comprises 148 residues: UPF0178 protein lpg0089 (148 aa).

It belongs to the UPF0178 family.

In Legionella pneumophila subsp. pneumophila (strain Philadelphia 1 / ATCC 33152 / DSM 7513), this protein is UPF0178 protein lpg0089.